A 489-amino-acid chain; its full sequence is Retinoblastoma-binding protein 5 homolog (489 aa).

WD repeat units follow at residues 22–63, 64–103, 147–187, 195–234, 248–290, and 292–330; these read DCIS…KIIS, AHVH…LEHK, DSDG…VVAS, SSAT…TLGK, VNKT…KILH, and TKGE…NWSA. A disordered region spans residues 451-489; sequence DVSLPDAPTDETHPLISSKASKDKQQPVGGKKAAGRTKK.

As to quaternary structure, core component of several methyltransferase-containing complexes. Component of the SET1 complex, composed at least of the catalytic subunit Set1, wds/WDR5, Wdr82, Rbbp5, ash2, Cfp1/CXXC1, hcf and Dpy-30L1. Component of the MLL3/4 complex composed at least of the catalytic subunit trr, ash2, Rbbp5, Dpy-30L1, wds, hcf, ptip, Pa1, Utx, Lpt and Ncoa6.

The protein resides in the nucleus. Its function is as follows. Component of the SET1 complex that specifically di- and trimethylates 'Lys-4' of histone H3 and of the MLL3/4 complex which also methylates histone H3 'Lys-4'. The protein is Retinoblastoma-binding protein 5 homolog of Drosophila melanogaster (Fruit fly).